The following is a 336-amino-acid chain: MAAWAGFSEEELRKLQHNGEVANQAVSVTLGRGRKPAQTNRSRQQLQRERALQLAAKQKEISQSLLPDQQLTRPPEPPASSHPAPPAETPDEQSVPVKHEAEPVKPDPASPVQSIPPADFKELDKQEVELREKNRLQQLQWEQRIMEEKNKKRKALLTKTIAEKSKQTQAEAIKLKKIQRELQVLDDSVSSDIGVLRKLIEQSSMDYSLAWKRFEKAEAEYVAAKMDLHRKTEVKEQLTEHLCAIIQQNELRKARKLEELMLQLELNAEEVPSPDQTQLQDKQKEPVTENGPAAELERCTEANGSSMSKDSSITETKISQDNQESEAADVSADGLR.

2 disordered regions span residues 26–118 and 268–336; these read VSVT…IPPA and AEEV…DGLR. Positions 61–72 are enriched in polar residues; sequence ISQSLLPDQQLT. Pro residues predominate over residues 74–88; the sequence is PPEPPASSHPAPPAE. The stretch at 213–271 forms a coiled coil; sequence RFEKAEAEYVAAKMDLHRKTEVKEQLTEHLCAIIQQNELRKARKLEELMLQLELNAEEV. Over residues 302-322 the composition is skewed to polar residues; the sequence is ANGSSMSKDSSITETKISQDN.

Belongs to the GORAB family.

The protein localises to the cytoplasm. The protein resides in the golgi apparatus. The polypeptide is RAB6-interacting golgin (gorab) (Danio rerio (Zebrafish)).